Here is a 515-residue protein sequence, read N- to C-terminus: SWI/SNF-related matrix-associated actin-dependent regulator of chromatin subfamily D member 1 (515 aa).

Residues 1–128 (MAARAGFQSV…RNHNAKKKKM (128 aa)) are disordered. Residues 14-23 (GGAGASGGAG) are compositionally biased toward gly residues. Positions 43–167 (APGQGLYRSP…DQTIMRKRLD (125 aa)) are interaction with ESR1, NR1H4, NR3C1, PGR and SMARCA4. Asymmetric dimethylarginine occurs at positions 68 and 88. Lys101 is covalently cross-linked (Glycyl lysine isopeptide (Lys-Gly) (interchain with G-Cter in SUMO2)). The segment covering 104–117 (APQQIQQVQQQAVQ) has biased composition (low complexity). The interaction with SMARCC1 and SMARCC2 stretch occupies residues 168–474 (IQEALKRPIK…TMTDVVGNPE (307 aa)). The necessary for GR/NR3C1-mediated remodeling and transcription from chromatin; required for GR/NR3C1 interaction with the BRG1/SMARCA4 complex in vivo stretch occupies residues 180 to 515 (RKLRIFISNT…LEQALGIRNT (336 aa)). Thr203 carries the phosphothreonine modification. The residue at position 223 (Lys223) is an N6-acetyllysine. The 78-residue stretch at 290 to 367 (YQPPQFKLDP…PQRLHALLMP (78 aa)) folds into the SWIB/MDM2 domain. The stretch at 412-440 (ASQQEIATLDNKIHETIETINQLKTQREF) forms a coiled coil.

This sequence belongs to the SMARCD family. Component of the multiprotein chromatin-remodeling complexes SWI/SNF: SWI/SNF-A (BAF), SWI/SNF-B (PBAF) and related complexes. The canonical complex contains a catalytic subunit (either SMARCA4/BRG1/BAF190A or SMARCA2/BRM/BAF190B), and at least SMARCE1, ACTL6A/BAF53, SMARCC1/BAF155, SMARCC2/BAF170, and SMARCB1/SNF5/BAF47. Other subunits specific to each of the complexes may also be present permitting several possible combinations developmentally and tissue specific. Component of the BAF complex, which includes at least actin (ACTB), ARID1A/BAF250A, ARID1B/BAF250B, SMARCA2/BRM, SMARCA4/BRG1/BAF190A, ACTL6A/BAF53, ACTL6B/BAF53B, SMARCE1/BAF57, SMARCC1/BAF155, SMARCC2/BAF170, SMARCB1/SNF5/INI1, and one or more SMARCD1/BAF60A, SMARCD2/BAF60B, or SMARCD3/BAF60C. In muscle cells, the BAF complex also contains DPF3. Component of neural progenitors-specific chromatin remodeling complex (npBAF complex) composed of at least, ARID1A/BAF250A or ARID1B/BAF250B, SMARCD1/BAF60A, SMARCD3/BAF60C, SMARCA2/BRM/BAF190B, SMARCA4/BRG1/BAF190A, SMARCB1/BAF47, SMARCC1/BAF155, SMARCE1/BAF57, SMARCC2/BAF170, PHF10/BAF45A, ACTL6A/BAF53A and actin. Component of neuron-specific chromatin remodeling complex (nBAF complex) composed of at least, ARID1A/BAF250A or ARID1B/BAF250B, SMARCD1/BAF60A, SMARCD3/BAF60C, SMARCA2/BRM/BAF190B, SMARCA4/BRG1/BAF190A, SMARCB1/BAF47, SMARCC1/BAF155, SMARCE1/BAF57, SMARCC2/BAF170, DPF1/BAF45B, DPF3/BAF45C, ACTL6B/BAF53B and actin. Component of the SWI/SNF-B (PBAF) chromatin remodeling complex, at least composed of SMARCA4/BRG1, SMARCB1/BAF47/SNF5, ACTL6A/BAF53A or ACTL6B/BAF53B, SMARCE1/BAF57, SMARCD1/BAF60A, SMARCD2/BAF60B, perhaps SMARCD3/BAF60C, SMARCC1/BAF155, SMARCC2/BAF170, PBRM1/BAF180, ARID2/BAF200 and actin (ACTB). Component of SWI/SNF (GBAF) subcomplex, which includes at least BICRA or BICRAL (mutually exclusive), BRD9, SS18, SMARCA2/BRM, SMARCA4/BRG1/BAF190A, ACTL6A/BAF53, SMARCC1/BAF155, and SMARCD1/BAF60A. Specifically interacts with the VDR heterodimer complex. Interacts with ESR1, NR3C1, NR1H4, PGR, SMARCA4, SMARCC1 and SMARCC2. Interacts with DPF2. Interacts with DPF3a (isoform 2 of DPF3/BAF45C) and with HDGFL2 in a DPF3a-dependent manner. Interacts with FOS, FOSB isoform 1 and 2, FOSL1 and FOSL2. Interacts with AKIRIN2. In terms of tissue distribution, ubiquitous.

Its subcellular location is the nucleus. In terms of biological role, involved in transcriptional activation and repression of select genes by chromatin remodeling (alteration of DNA-nucleosome topology). Component of SWI/SNF chromatin remodeling complexes that carry out key enzymatic activities, changing chromatin structure by altering DNA-histone contacts within a nucleosome in an ATP-dependent manner. Belongs to the neural progenitors-specific chromatin remodeling complex (npBAF complex) and the neuron-specific chromatin remodeling complex (nBAF complex). During neural development a switch from a stem/progenitor to a postmitotic chromatin remodeling mechanism occurs as neurons exit the cell cycle and become committed to their adult state. The transition from proliferating neural stem/progenitor cells to postmitotic neurons requires a switch in subunit composition of the npBAF and nBAF complexes. As neural progenitors exit mitosis and differentiate into neurons, npBAF complexes which contain ACTL6A/BAF53A and PHF10/BAF45A, are exchanged for homologous alternative ACTL6B/BAF53B and DPF1/BAF45B or DPF3/BAF45C subunits in neuron-specific complexes (nBAF). The npBAF complex is essential for the self-renewal/proliferative capacity of the multipotent neural stem cells. The nBAF complex along with CREST plays a role regulating the activity of genes essential for dendrite growth. Has a strong influence on vitamin D-mediated transcriptional activity from an enhancer vitamin D receptor element (VDRE). May be a link between mammalian SWI-SNF-like chromatin remodeling complexes and the vitamin D receptor (VDR) heterodimer. Mediates critical interactions between nuclear receptors and the BRG1/SMARCA4 chromatin-remodeling complex for transactivation. The protein is SWI/SNF-related matrix-associated actin-dependent regulator of chromatin subfamily D member 1 (Smarcd1) of Mus musculus (Mouse).